The chain runs to 199 residues: Potassium-transporting ATPase KdpC subunit (199 aa).

The chain crosses the membrane as a helical span at residues 7–27; sequence PAIVLLLALTLLTGLAYPLAM. A disordered region spans residues 67–86; it reads HGRPSATTAADPQDSSKTVP. A compositionally biased stretch (polar residues) spans 71 to 84; sequence SATTAADPQDSSKT.

The protein belongs to the KdpC family. As to quaternary structure, the system is composed of three essential subunits: KdpA, KdpB and KdpC.

It localises to the cell inner membrane. Functionally, part of the high-affinity ATP-driven potassium transport (or Kdp) system, which catalyzes the hydrolysis of ATP coupled with the electrogenic transport of potassium into the cytoplasm. This subunit acts as a catalytic chaperone that increases the ATP-binding affinity of the ATP-hydrolyzing subunit KdpB by the formation of a transient KdpB/KdpC/ATP ternary complex. The protein is Potassium-transporting ATPase KdpC subunit of Rhodopseudomonas palustris (strain BisB18).